Here is a 160-residue protein sequence, read N- to C-terminus: Protein shisa-like-2B (160 aa).

A helical transmembrane segment spans residues 65-85; that stretch reads IGALIGLGIAALVLLAFVISV.

This sequence belongs to the shisa family.

Its subcellular location is the membrane. The polypeptide is Protein shisa-like-2B (Homo sapiens (Human)).